Here is an 86-residue protein sequence, read N- to C-terminus: Large ribosomal subunit protein bL31B (86 aa).

The protein belongs to the bacterial ribosomal protein bL31 family. Type B subfamily. In terms of assembly, part of the 50S ribosomal subunit.

The protein is Large ribosomal subunit protein bL31B of Vibrio vulnificus (strain CMCP6).